Here is a 600-residue protein sequence, read N- to C-terminus: Melanophilin (600 aa).

The 121-residue stretch at 4 to 124 (KLDLSKLTDE…IGSLEWYYEH (121 aa)) folds into the RabBD domain. Residues 64 to 107 (CARCLQPYQLLVNSKRQCLECGLFTCKSCGRVHPEEQGWICDPC) form an FYVE-type zinc finger. Disordered regions lie at residues 146–277 (QGGA…AELC), 390–465 (EELT…LSEL), 499–541 (TVKP…AKAM), and 553–600 (NSLK…AHQS). 2 stretches are compositionally biased toward basic and acidic residues: residues 232–243 (CSEKAAPHKAEG) and 409–420 (KDEKAEPNRDKS). A coiled-coil region spans residues 373–496 (GVRTEADVEE…ESRIAALRAA (124 aa)). Residues 558–569 (QGKDDDSFDRKS) show a composition bias toward basic and acidic residues.

Binds RAB27A that has been activated by GTP-binding via its N-terminus. Binds MYO5A via its C-terminal coiled coil domain.

It is found in the cytoplasm. Rab effector protein involved in melanosome transport. Serves as link between melanosome-bound RAB27A and the motor protein MYO5A. In Homo sapiens (Human), this protein is Melanophilin (MLPH).